Reading from the N-terminus, the 303-residue chain is MKIIFMGSPEFSVPALCALLEEKDHEVIAVYTRLPKPAGRRGKVLTKTPIHIIAEQNNIEVNTPKSLKHDYEQEKIFALNPDVIVVVAYGLIIPEAVLSIPKYGCINIHPSLLPRWRGAAPIHYAILSGDEQTGVTIMQMNELWDEGDILLQRDIPIDEQDNIDTLSQKLSNLGSSMLIEVLNNIDHLVPIKQNANDATYTNKIIDFHIDCNEEAQVICRKIRALYPKAFLFFNDKRLRILKANYCPDSDLQNLKPGTVINSHMHIKCKNGVLIPLIVQLEGKNPCSINDFIHGYSISNSSIT.

111-114 (SLLP) provides a ligand contact to (6S)-5,6,7,8-tetrahydrofolate.

It belongs to the Fmt family.

It carries out the reaction L-methionyl-tRNA(fMet) + (6R)-10-formyltetrahydrofolate = N-formyl-L-methionyl-tRNA(fMet) + (6S)-5,6,7,8-tetrahydrofolate + H(+). Its function is as follows. Attaches a formyl group to the free amino group of methionyl-tRNA(fMet). The formyl group appears to play a dual role in the initiator identity of N-formylmethionyl-tRNA by promoting its recognition by IF2 and preventing the misappropriation of this tRNA by the elongation apparatus. This chain is Methionyl-tRNA formyltransferase, found in Ehrlichia chaffeensis (strain ATCC CRL-10679 / Arkansas).